A 271-amino-acid chain; its full sequence is ATP synthase subunit a (271 aa).

5 helical membrane passes run 47-67 (WENIIFAILVASLISLVAYLG), 107-127 (FLGTLFIYIFTMNIFGMVPLM), 133-153 (SLNITAALAICVFCLVQFLNI), 209-229 (ILIGTFALMGVVMISSVETFV), and 235-255 (LPFMFLGLLTSFMQALVFTLL).

Belongs to the ATPase A chain family. In terms of assembly, F-type ATPases have 2 components, CF(1) - the catalytic core - and CF(0) - the membrane proton channel. CF(1) has five subunits: alpha(3), beta(3), gamma(1), delta(1), epsilon(1). CF(0) has three main subunits: a(1), b(2) and c(9-12). The alpha and beta chains form an alternating ring which encloses part of the gamma chain. CF(1) is attached to CF(0) by a central stalk formed by the gamma and epsilon chains, while a peripheral stalk is formed by the delta and b chains.

It is found in the cell inner membrane. Its function is as follows. Key component of the proton channel; it plays a direct role in the translocation of protons across the membrane. This chain is ATP synthase subunit a, found in Protochlamydia amoebophila (strain UWE25).